A 211-amino-acid polypeptide reads, in one-letter code: Transcriptional regulatory protein RcsA (211 aa).

Residues 135–200 (LDVHPLTLSQ…VIYHVVRLTD (66 aa)) enclose the HTH luxR-type domain. The H-T-H motif DNA-binding region spans 159–178 (TIQISDKMQIKAKTVSSHKG).

It belongs to the RcsA family.

Its function is as follows. Component of the Rcs signaling system, which controls transcription of numerous genes. Binds to DNA to regulate expression of genes. In Pantoea stewartii subsp. stewartii (Erwinia stewartii), this protein is Transcriptional regulatory protein RcsA.